An 88-amino-acid chain; its full sequence is uncharacterized protein (88 aa).

Residues 1-54 (AVDAYDDDDNLKNEEGDYYNESDDGYSGDEEEEEKQEEDEQDDDDLQFDDGVPE) form a disordered region. Over residues 16-53 (GDYYNESDDGYSGDEEEEEKQEEDEQDDDDLQFDDGVP) the composition is skewed to acidic residues.

In terms of tissue distribution, predominantly in developing fruit.

This is an uncharacterized protein from Fragaria ananassa (Strawberry).